The following is a 1055-amino-acid chain: Protein SUPPRESSOR OF QUENCHING 1, chloroplastic (1055 aa).

The N-terminal 56 residues, 1 to 56 (MALKLTSPPSVFSQSRRLSSSSLIPIRSKSTFTGFRSRTGVYLSKTTALQSSTKLS), are a transit peptide targeting the chloroplast. Residue valine 57 is modified to N-acetylvaline. Residues 59 to 327 (AESPAATIAT…FQGSRRDILR (269 aa)) are Stromal-facing. Catalysis depends on aspartate 80, which acts as the Nucleophile. Mg(2+) is bound by residues aspartate 80 and aspartate 82. Residue aspartate 80 participates in substrate binding. Aspartate 82 (proton donor) is an active-site residue. Residues glutamate 89, 118-122 (TGEAK), 141-144 (AKER), and 183-189 (SSADRIK) each bind substrate. Aspartate 242 lines the Mg(2+) pocket. A helical transmembrane segment spans residues 328–345 (YGSLGIALSCVYFAATNW). The Lumenal segment spans residues 346–1055 (KAMQYASPKA…AGGLQLQGTR (710 aa)). Residues 359–536 (ALVGAKSPSF…LDDVVAAALT (178 aa)) form the Thioredoxin domain. Cysteine 431 and cysteine 434 form a disulfide bridge. 5 NHL repeats span residues 565–597 (PLKFPGKLAIDTLNNRLFISDSNHNRIIVTDLE), 611–647 (GFQDGSFEDAAFNRPQGLAYNAKKNLLYVADTENHAL), 673–712 (GRKGTKQLLNSPWDVCFEPVNEKVYIAMAGQHQIWEYSVL), 802–832 (LQHPLGVLCANDGQIYLTDSYNHKIKKLDPV), and 854–887 (GAQLSEPAGLAITENGRLFVADTNNSLIRYIDLN).

In the N-terminal section; belongs to the HAD-like hydrolase superfamily. It in the C-terminal section; belongs to the thioredoxin family. Mg(2+) serves as cofactor.

It localises to the plastid. It is found in the chloroplast thylakoid membrane. Required to maintain light harvesting efficiency, especially during nonphotochemical quenching (NPQ) recovery, via the regulation of chlorophyll excited-state lifetime probably by preventing the formation of a slowly reversible form of antenna quenching. The chain is Protein SUPPRESSOR OF QUENCHING 1, chloroplastic from Arabidopsis thaliana (Mouse-ear cress).